Here is a 298-residue protein sequence, read N- to C-terminus: uncharacterized protein (298 aa).

A run of 9 helical transmembrane segments spans residues 10–30 (VIYT…WKLL), 36–56 (LDIL…VLFF), 76–96 (ILSL…YIWA), 101–121 (FLLE…LLGI), 142–162 (GVII…LLAF), 179–199 (AIGL…YLLF), 212–232 (GTWL…LLFA), 243–263 (VGIL…FVYH), and 271–291 (AFTF…QVKW). EamA domains are found at residues 17–148 (FIMW…ISAF) and 162–286 (FSFG…LFTF).

This sequence belongs to the EamA transporter family.

It localises to the cell membrane. This is an uncharacterized protein from Bacillus subtilis (strain 168).